The sequence spans 172 residues: Signal peptidase complex catalytic subunit SEC11 (172 aa).

Topologically, residues 1–14 (MLSSLANPRQAASQ) are cytoplasmic. The chain crosses the membrane as a helical; Signal-anchor for type II membrane protein span at residues 15–35 (LLNFALILSTAFMMWKGLSVV). Topologically, residues 36 to 172 (SDSPSPIVVV…MGLVVVLQRE (137 aa)) are lumenal. Active-site charge relay system residues include Ser49, His90, and Asp115. Residues 158 to 169 (AMLGIMGLVVVL) form a C-terminal short (CTS) helix region.

This sequence belongs to the peptidase S26B family. Component of the signal peptidase complex (SPC) composed of a catalytic subunit SEC11 and three accessory subunits SPC1, SPC2 and SPC3. The complex induces a local thinning of the ER membrane which is used to measure the length of the signal peptide (SP) h-region of protein substrates. This ensures the selectivity of the complex towards h-regions shorter than 18-20 amino acids. SPC associates with the translocon complex.

It is found in the endoplasmic reticulum membrane. It carries out the reaction Cleavage of hydrophobic, N-terminal signal or leader sequences from secreted and periplasmic proteins.. Its function is as follows. Catalytic component of the signal peptidase complex (SPC) which catalyzes the cleavage of N-terminal signal sequences from nascent proteins as they are translocated into the lumen of the endoplasmic reticulum. Specifically cleaves N-terminal signal peptides that contain a hydrophobic alpha-helix (h-region) shorter than 18-20 amino acids. The protein is Signal peptidase complex catalytic subunit SEC11 (SEC11) of Colletotrichum graminicola (strain M1.001 / M2 / FGSC 10212) (Maize anthracnose fungus).